A 2767-amino-acid chain; its full sequence is Serine/threonine-protein kinase ATM (2767 aa).

The FAT domain occupies 1713–2317 (NVVMASNHCQ…FYQLYPLVFA (605 aa)). One can recognise a PI3K/PI4K catalytic domain in the interval 2419 to 2734 (WTNETTQCGG…KLDGREAGTM (316 aa)). The segment at 2425–2431 (QCGGLNA) is G-loop. A catalytic loop region spans residues 2601-2609 (GLGDRHTQN). The segment at 2621-2645 (HIDFGIAFEQGKIQTTPETVPFRLT) is activation loop. The FATC domain maps to 2735-2767 (GDSNVEAQVERLINEATLPSNLCMLFPGWDPHL).

Belongs to the PI3/PI4-kinase family. ATM subfamily.

It localises to the nucleus. Its subcellular location is the chromosome. The protein localises to the telomere. The catalysed reaction is L-seryl-[protein] + ATP = O-phospho-L-seryl-[protein] + ADP + H(+). The enzyme catalyses L-threonyl-[protein] + ATP = O-phospho-L-threonyl-[protein] + ADP + H(+). Its function is as follows. Serine/threonine-protein kinase which recognizes the substrate consensus sequence [ST]-Q. Required to suppress spontaneous apoptosis of proliferating cells during development, and for their proper differentiation. Required for female fertility. Protects telomeres from fusion, maybe by recruiting or maintaining chromatin-modifying complexes such as Su(var)205/HP1. May activate checkpoint signaling in response to DNA double-stranded breaks induced by low-dose ionizing radiation. May phosphorylate histone H2AV. This is Serine/threonine-protein kinase ATM (tefu) from Drosophila melanogaster (Fruit fly).